Reading from the N-terminus, the 40-residue chain is Large ribosomal subunit protein bL36B (40 aa).

Belongs to the bacterial ribosomal protein bL36 family.

The protein is Large ribosomal subunit protein bL36B of Leifsonia xyli subsp. xyli (strain CTCB07).